The following is a 665-amino-acid chain: F-box/WD repeat-containing protein lin-23 (665 aa).

Residues 81-127 form the F-box domain; the sequence is RDFISNLPAHLVELILFNVNSDSLKSCEEVSTSWRCALARGQHWKKL. 7 WD repeats span residues 220–257, 260–299, 301–337, 343–380, 383–420, 423–460, and 472–509; these read ENSK…CSRI, GHTG…KTLI, HCEA…DITI, GHRA…FVRT, GHRR…CLRV, GHEE…DPRA, and QHTG…PSGL. The tract at residues 574 to 665 is disordered; it reads AAAEAARGAG…VDEEMPDGGP (92 aa). Composition is skewed to acidic residues over residues 584–595 and 655–665; these read DNDESSSEEDLD and DVDEEMPDGGP.

As to quaternary structure, part of a SCF (SKP1-cullin-F-box) protein ligase complex.

The protein localises to the cytoplasm. Functionally, functions cell autonomously to negatively regulate cell cycle progression. Required to restrain cell proliferation in response to developmental cues. Probably recognizes and binds to some proteins and promotes their ubiquitination and degradation. This Caenorhabditis elegans protein is F-box/WD repeat-containing protein lin-23 (lin-23).